A 220-amino-acid chain; its full sequence is MIKWLARPADYGSVWDAMKAFTAARGPGTADEIWLCEHAPVYTLGQAGRPEHLLNPGLIPVVHCDRGGQVTYHGPGQVLAYTLFDLRRAGLYVREYVDMLEQATLATLRELGLEQACRKPGAPGIYVPQPGGELAKIAALGVKVRNGYAYHGLALNIDMDLSPFLGINPCGYEGLRTVDLAACGVRTSVERAGELLAAQLARAHGHAVQQRAAALAGVPG.

A BPL/LPL catalytic domain is found at Pro27 to Val208. Substrate contacts are provided by residues Arg66–His73, Ala139–Gly141, and Gly152–Ala154. Cys170 acts as the Acyl-thioester intermediate in catalysis.

Belongs to the LipB family.

It localises to the cytoplasm. It catalyses the reaction octanoyl-[ACP] + L-lysyl-[protein] = N(6)-octanoyl-L-lysyl-[protein] + holo-[ACP] + H(+). The protein operates within protein modification; protein lipoylation via endogenous pathway; protein N(6)-(lipoyl)lysine from octanoyl-[acyl-carrier-protein]: step 1/2. Its function is as follows. Catalyzes the transfer of endogenously produced octanoic acid from octanoyl-acyl-carrier-protein onto the lipoyl domains of lipoate-dependent enzymes. Lipoyl-ACP can also act as a substrate although octanoyl-ACP is likely to be the physiological substrate. The chain is Octanoyltransferase from Bordetella parapertussis (strain 12822 / ATCC BAA-587 / NCTC 13253).